The primary structure comprises 384 residues: GDSL esterase/lipase ENOD8 (384 aa).

The N-terminal stretch at 1-31 (MKFMAKIELSRHIPLVTLIVLVLCITPPIFA) is a signal peptide. Residue Ser46 is the Nucleophile of the active site. Residues Asn105, Asn191, Asn198, Asn276, and Asn330 are each glycosylated (N-linked (GlcNAc...) asparagine). Active-site residues include Asp349 and His352.

It belongs to the 'GDSL' lipolytic enzyme family. As to expression, expressed in root nodules (at protein level).

The protein localises to the symbiosome. Has lipase and esterase activities. Probably involved in root nodule physiology. The polypeptide is GDSL esterase/lipase ENOD8 (Medicago truncatula (Barrel medic)).